Here is a 472-residue protein sequence, read N- to C-terminus: Diaminopimelate decarboxylase (472 aa).

The interval methionine 1–valine 23 is disordered. An N6-(pyridoxal phosphate)lysine modification is found at lysine 97. Residues glycine 283 and glutamate 325 to arginine 328 contribute to the pyridoxal 5'-phosphate site. Residues arginine 328, arginine 369, and tyrosine 373 each contribute to the substrate site. Catalysis depends on cysteine 400, which acts as the Proton donor. Residues glutamate 401 and tyrosine 430 each contribute to the substrate site. Pyridoxal 5'-phosphate is bound at residue tyrosine 430.

Belongs to the Orn/Lys/Arg decarboxylase class-II family. LysA subfamily. As to quaternary structure, homodimer. The cofactor is pyridoxal 5'-phosphate.

It carries out the reaction meso-2,6-diaminopimelate + H(+) = L-lysine + CO2. The protein operates within amino-acid biosynthesis; L-lysine biosynthesis via DAP pathway; L-lysine from DL-2,6-diaminopimelate: step 1/1. Its function is as follows. Specifically catalyzes the decarboxylation of meso-diaminopimelate (meso-DAP) to L-lysine. The polypeptide is Diaminopimelate decarboxylase (Mycobacterium leprae (strain TN)).